We begin with the raw amino-acid sequence, 629 residues long: tRNA uridine 5-carboxymethylaminomethyl modification enzyme MnmG (629 aa).

FAD is bound by residues Gly15–Gly20, Val127, and Ser182. The disordered stretch occupies residues Thr203–Arg227. Basic and acidic residues predominate over residues Ser215 to Arg227. Position 274–288 (Gly274–Phe288) interacts with NAD(+). Residue Gln371 coordinates FAD.

The protein belongs to the MnmG family. Homodimer. Heterotetramer of two MnmE and two MnmG subunits. FAD is required as a cofactor.

It localises to the cytoplasm. In terms of biological role, NAD-binding protein involved in the addition of a carboxymethylaminomethyl (cmnm) group at the wobble position (U34) of certain tRNAs, forming tRNA-cmnm(5)s(2)U34. The sequence is that of tRNA uridine 5-carboxymethylaminomethyl modification enzyme MnmG from Listeria welshimeri serovar 6b (strain ATCC 35897 / DSM 20650 / CCUG 15529 / CIP 8149 / NCTC 11857 / SLCC 5334 / V8).